Here is a 304-residue protein sequence, read N- to C-terminus: N-acetyl-D-glucosamine kinase (304 aa).

ATP is bound by residues 4–11 (GFDIGGTK) and 133–140 (GFGGGLIF). 4 residues coordinate Zn(2+): His-157, Cys-178, Cys-180, and Cys-185.

It belongs to the ROK (NagC/XylR) family. NagK subfamily.

The enzyme catalyses N-acetyl-D-glucosamine + ATP = N-acetyl-D-glucosamine 6-phosphate + ADP + H(+). Its pathway is cell wall biogenesis; peptidoglycan recycling. Its function is as follows. Catalyzes the phosphorylation of N-acetyl-D-glucosamine (GlcNAc) derived from cell-wall degradation, yielding GlcNAc-6-P. This Pasteurella multocida (strain Pm70) protein is N-acetyl-D-glucosamine kinase.